We begin with the raw amino-acid sequence, 223 residues long: MANTALADTRSELEAGARALGLPLEGVQLDRLLAYQVLLAKWNRVYNLTAIRDAGDMLTHHLLDSLAAVPRIAELVRRVQPEASRVLDVGSGGGLPGIPLAIACPDIGVTMVDIVQKKTAFLTQCRAELGLTNAQSHWGHVEKLADAVGYGVITSRAFAELNDFVRLAGHLLAPGGRMVAMKGVRPDAEIARLPEGWAVESIERLTVPGLPAERHLVILAPSA.

Residues Gly90, Leu95, Val141–Glu142, and Arg156 contribute to the S-adenosyl-L-methionine site.

This sequence belongs to the methyltransferase superfamily. RNA methyltransferase RsmG family.

It is found in the cytoplasm. The enzyme catalyses guanosine(527) in 16S rRNA + S-adenosyl-L-methionine = N(7)-methylguanosine(527) in 16S rRNA + S-adenosyl-L-homocysteine. Its function is as follows. Specifically methylates the N7 position of guanine in position 527 of 16S rRNA. The sequence is that of Ribosomal RNA small subunit methyltransferase G from Ralstonia nicotianae (strain ATCC BAA-1114 / GMI1000) (Ralstonia solanacearum).